Here is a 417-residue protein sequence, read N- to C-terminus: Serine hydroxymethyltransferase (417 aa).

Residues Leu-121 and 125–127 (GHL) each bind (6S)-5,6,7,8-tetrahydrofolate. Lys-229 bears the N6-(pyridoxal phosphate)lysine mark. 355-357 (SPF) contacts (6S)-5,6,7,8-tetrahydrofolate.

The protein belongs to the SHMT family. In terms of assembly, homodimer. It depends on pyridoxal 5'-phosphate as a cofactor.

Its subcellular location is the cytoplasm. It catalyses the reaction (6R)-5,10-methylene-5,6,7,8-tetrahydrofolate + glycine + H2O = (6S)-5,6,7,8-tetrahydrofolate + L-serine. The protein operates within one-carbon metabolism; tetrahydrofolate interconversion. It functions in the pathway amino-acid biosynthesis; glycine biosynthesis; glycine from L-serine: step 1/1. Functionally, catalyzes the reversible interconversion of serine and glycine with tetrahydrofolate (THF) serving as the one-carbon carrier. This reaction serves as the major source of one-carbon groups required for the biosynthesis of purines, thymidylate, methionine, and other important biomolecules. Also exhibits THF-independent aldolase activity toward beta-hydroxyamino acids, producing glycine and aldehydes, via a retro-aldol mechanism. The sequence is that of Serine hydroxymethyltransferase from Tolumonas auensis (strain DSM 9187 / NBRC 110442 / TA 4).